Here is a 420-residue protein sequence, read N- to C-terminus: Cyclin-B2-1 (420 aa).

Residues 1–61 (MDRASENRRL…EKSGKEEQKP (61 aa)) form a disordered region. Over residues 49–60 (PMLEKSGKEEQK) the composition is skewed to basic and acidic residues.

The protein belongs to the cyclin family. Cyclin AB subfamily. As to quaternary structure, interacts with CDKB2-1. In terms of tissue distribution, expressed in the root apices.

Involved in the control of the cell cycle at the G2/M (mitosis) transition. May activate CDKB2-1 kinase. The sequence is that of Cyclin-B2-1 (CYCB2-1) from Oryza sativa subsp. japonica (Rice).